The following is a 381-amino-acid chain: Bifunctional enzyme Fae/Hps (381 aa).

Residues 1-150 (MIKFGEAVLG…KEKYRALHPL (150 aa)) form a formaldehyde-activating enzyme region. The interval 151-381 (VGFRDVRLEY…DEDEDIGEEL (231 aa)) is 3-hexulose-6-phosphate synthase.

This sequence in the N-terminal section; belongs to the formaldehyde-activating enzyme family. It in the C-terminal section; belongs to the HPS/KGPDC family. HPS subfamily.

It catalyses the reaction 5,6,7,8-tetrahydromethanopterin + formaldehyde = 5,10-methylenetetrahydromethanopterin + H2O. The catalysed reaction is D-ribulose 5-phosphate + formaldehyde = D-arabino-hex-3-ulose 6-phosphate. Its pathway is carbohydrate biosynthesis; D-ribose 5-phosphate biosynthesis. Functionally, catalyzes the condensation of formaldehyde with tetrahydromethanopterin (H(4)MPT) to 5,10-methylenetetrahydromethanopterin. Its function is as follows. Catalyzes the reversible formation of ribulose-5-phosphate and formaldehyde from 3-hexulose-6-phosphate. The chain is Bifunctional enzyme Fae/Hps from Methanocaldococcus jannaschii (strain ATCC 43067 / DSM 2661 / JAL-1 / JCM 10045 / NBRC 100440) (Methanococcus jannaschii).